A 504-amino-acid polypeptide reads, in one-letter code: MEEFKRNLELDRSQXHDFIYPLIFQEYIYALAHDCSLNRFLFFENPGXDNKXSLLIVKRLINHLITQIYQQNHFLFSANDSNQNQFMGYNKNWYFXMIFEGFAIVVEIPFSXQLLSSLEGKERVKSHNLRSIHSIFPFLEDKFPHLNYVLDILIPHPVHLEILVQTLRIWIKDVSSLHLLRFFLHESRNWNSLTTPKKSSFSFSKXNERLFFFLYNFHVCEYESIFVFLRNQSSHLRSISSEIFLERIFFYRKIEVSSKDFKAILWLFKDPFLHYIRYQGKSLLASKGTLVLMNKWKYYFVTFSQCYFYMWSQPRKININLLSNHSLDFMGYLSSVRLNPLMVRSQMLENAFLIRNAIKKFDTLVPITPMIGSLSXXXXXXXXXXXXXXXXXXXXXXXXXXXXXXXXXXXXXXXXXXXXXXXXXXXXXXXXXXXXXXXXXRKHKITVRAFLKKLGVGLLEEFFTEEEQVFYLTLPKASYTSGKLYRRRIWYLDIICINDLSNHE.

The protein belongs to the intron maturase 2 family. MatK subfamily.

The protein localises to the plastid. It is found in the chloroplast. Functionally, usually encoded in the trnK tRNA gene intron. Probably assists in splicing its own and other chloroplast group II introns. In Chimaphila umbellata (Pipsissewa), this protein is Maturase K.